Consider the following 1023-residue polypeptide: Sodium/potassium-transporting ATPase subunit alpha-1 (1023 aa).

Residues Met1–Val5 constitute a propeptide that is removed on maturation. The span at Met1–Glu11 shows a compositional bias: basic and acidic residues. Residues Met1–Glu38 form a disordered region. Residues Gly6–Pro87 are Cytoplasmic-facing. Lys9 carries the post-translational modification N6-acetyllysine. Phosphotyrosine is present on Tyr10. A Phosphoserine; by PKC modification is found at Ser16. N6-acetyllysine is present on Lys21. The segment covering Lys28–Glu38 has biased composition (basic and acidic residues). 2 positions are modified to phosphoserine: Ser40 and Ser47. The segment at Pro82–Pro84 is phosphoinositide-3 kinase binding. Residues Glu88 to Ala108 form a helical membrane-spanning segment. The Extracellular segment spans residues Ile109–Tyr131. A helical membrane pass occupies residues Leu132 to Ala152. Residues Lys153–Ile288 lie on the Cytoplasmic side of the membrane. Positions Ser216–Asn235 are disordered. Ser228 bears the Phosphoserine mark. Tyr260 carries the phosphotyrosine modification. Residues Glu289–Ile308 traverse the membrane as a helical segment. Residues Leu309 to Ala320 are Extracellular-facing. A helical transmembrane segment spans residues Val321 to Ala338. The Cytoplasmic portion of the chain corresponds to Thr339–Leu772. Residue Asp376 is the 4-aspartylphosphate intermediate of the active site. Phosphoserine occurs at positions 452 and 484. Lys487 lines the ATP pocket. Phosphotyrosine is present on Tyr542. A mediates interaction with SCN7A region spans residues Arg596 to Asp717. Lys661 is subject to N6-succinyllysine. Ser668 and Ser675 each carry phosphoserine. Positions 717 and 721 each coordinate Mg(2+). A helical transmembrane segment spans residues Lys773 to Ile792. Over Phe793 to Leu802 the chain is Extracellular. Residues Gly803–Ala823 form a helical membrane-spanning segment. Residues Tyr824–Lys843 lie on the Cytoplasmic side of the membrane. The helical transmembrane segment at Leu844–Phe866 threads the bilayer. Residues Phe867 to Cys918 lie on the Extracellular side of the membrane. A helical membrane pass occupies residues His919–Lys938. The Cytoplasmic portion of the chain corresponds to Thr939–Asn951. Phosphoserine; by PKA is present on Ser943. Residues Lys952–Tyr970 form a helical membrane-spanning segment. Topologically, residues Cys971–Pro985 are extracellular. A helical membrane pass occupies residues Thr986 to Lys1006. Residues Leu1007–Tyr1023 lie on the Cytoplasmic side of the membrane.

It belongs to the cation transport ATPase (P-type) (TC 3.A.3) family. Type IIC subfamily. In terms of assembly, the sodium/potassium-transporting ATPase is composed of a catalytic alpha subunit, an auxiliary non-catalytic beta subunit and an additional regulatory subunit. Interacts with regulatory subunit FXYD1. Interacts with regulatory subunit FXYD3. Interacts with SIK1. Interacts with SLC35G1 and STIM1. Interacts with CLN3; this interaction regulates the sodium/potassium-transporting ATPase complex localization at the plasma membrane. Interacts with SCN7A; activates ATP1A1 P-type sodium:potassium-exchanging transporter activity which indirectly signals to nearby neurons to regulate sodium homeostasis. Post-translationally, phosphorylation on Tyr-10 modulates pumping activity. Phosphorylation of Ser-943 by PKA modulates the response of ATP1A1 to PKC. Dephosphorylation by protein phosphatase 2A (PP2A) following increases in intracellular sodium, leading to increase catalytic activity.

Its subcellular location is the cell membrane. The protein localises to the basolateral cell membrane. It is found in the sarcolemma. The protein resides in the cell projection. It localises to the axon. Its subcellular location is the melanosome. It catalyses the reaction K(+)(out) + Na(+)(in) + ATP + H2O = K(+)(in) + Na(+)(out) + ADP + phosphate + H(+). This is the catalytic component of the active enzyme, which catalyzes the hydrolysis of ATP coupled with the exchange of sodium and potassium ions across the plasma membrane. This action creates the electrochemical gradient of sodium and potassium ions, providing the energy for active transport of various nutrients. Could also be part of an osmosensory signaling pathway that senses body-fluid sodium levels and controls salt intake behavior as well as voluntary water intake to regulate sodium homeostasis. The polypeptide is Sodium/potassium-transporting ATPase subunit alpha-1 (ATP1A1) (Pongo abelii (Sumatran orangutan)).